The sequence spans 469 residues: UDP-N-acetylmuramate--L-alanine ligase (469 aa).

An ATP-binding site is contributed by 113–119; it reads GTHGKTT.

The protein belongs to the MurCDEF family.

The protein resides in the cytoplasm. The catalysed reaction is UDP-N-acetyl-alpha-D-muramate + L-alanine + ATP = UDP-N-acetyl-alpha-D-muramoyl-L-alanine + ADP + phosphate + H(+). The protein operates within cell wall biogenesis; peptidoglycan biosynthesis. Functionally, cell wall formation. The protein is UDP-N-acetylmuramate--L-alanine ligase of Neisseria gonorrhoeae (strain ATCC 700825 / FA 1090).